The primary structure comprises 146 residues: 3-dehydroquinate dehydratase (146 aa).

The Proton acceptor role is filled by Y23. 3 residues coordinate substrate: N75, H81, and D88. H101 (proton donor) is an active-site residue. Residues 102–103 and R112 each bind substrate; that span reads LS.

Belongs to the type-II 3-dehydroquinase family. In terms of assembly, homododecamer.

The enzyme catalyses 3-dehydroquinate = 3-dehydroshikimate + H2O. It participates in metabolic intermediate biosynthesis; chorismate biosynthesis; chorismate from D-erythrose 4-phosphate and phosphoenolpyruvate: step 3/7. Its function is as follows. Catalyzes a trans-dehydration via an enolate intermediate. This is 3-dehydroquinate dehydratase from Saccharophagus degradans (strain 2-40 / ATCC 43961 / DSM 17024).